A 232-amino-acid chain; its full sequence is Large ribosomal subunit protein uL1 (232 aa).

This sequence belongs to the universal ribosomal protein uL1 family. As to quaternary structure, part of the 50S ribosomal subunit.

Binds directly to 23S rRNA. The L1 stalk is quite mobile in the ribosome, and is involved in E site tRNA release. Functionally, protein L1 is also a translational repressor protein, it controls the translation of the L11 operon by binding to its mRNA. The protein is Large ribosomal subunit protein uL1 of Azorhizobium caulinodans (strain ATCC 43989 / DSM 5975 / JCM 20966 / LMG 6465 / NBRC 14845 / NCIMB 13405 / ORS 571).